Reading from the N-terminus, the 467-residue chain is uncharacterized protein (467 aa).

Sel1-like repeat units lie at residues 38 to 73, 107 to 138, 139 to 172, 173 to 208, 240 to 275, 276 to 311, 343 to 378, 379 to 414, and 415 to 450; these read PAAA…EQGH, PEAQ…KNNN, PHGQ…AQGL, PEAH…QQGY, PDAH…AERH, PEGL…EAGS, AERL…ELGH, SKAQ…AKKD, and SMAF…NNGY.

This is an uncharacterized protein from Neisseria meningitidis serogroup B (strain ATCC BAA-335 / MC58).